A 590-amino-acid polypeptide reads, in one-letter code: DNA mismatch repair protein MutL (590 aa).

Residues 335-351 show a composition bias toward polar residues; that stretch reads PLSSASPKLPESTTATA. The tract at residues 335–354 is disordered; the sequence is PLSSASPKLPESTTATAQPH.

Belongs to the DNA mismatch repair MutL/HexB family.

Functionally, this protein is involved in the repair of mismatches in DNA. It is required for dam-dependent methyl-directed DNA mismatch repair. May act as a 'molecular matchmaker', a protein that promotes the formation of a stable complex between two or more DNA-binding proteins in an ATP-dependent manner without itself being part of a final effector complex. In Dichelobacter nodosus (strain VCS1703A), this protein is DNA mismatch repair protein MutL.